A 396-amino-acid polypeptide reads, in one-letter code: 3-amino-4-hydroxybenzoate 2-monooxygenase PtmB3 (396 aa).

Residues A19, 38-39, and R112 contribute to the FAD site; that span reads EQ. Y217 serves as the catalytic Proton acceptor. Position 295 (D295) interacts with FAD. The segment at 352 to 371 is disordered; that stretch reads RERGHEFHLPDGPQQRLRDR.

Belongs to the 6-hydroxynicotinate 3-monooxygenase family. The cofactor is FAD.

The catalysed reaction is 3-amino-4-hydroxybenzoate + NADPH + O2 + H(+) = 3-amino-2,4-dihydroxybenzoate + NADP(+) + H2O. The protein operates within antibiotic biosynthesis. Its function is as follows. Part of a gene cluster involved in the biosynthesis of thioplatensimycin (thioPTM) and platensimycin (PTM), potent and selective inhibitors of bacterial and mammalian fatty acid synthases. Catalyzes the hydroxylation of 3-amino-4-hydroxybenzoate (3,4-AHBA) to 3-amino-2,4-dihydroxybenzoate (3,2,4-ADHBA). This is 3-amino-4-hydroxybenzoate 2-monooxygenase PtmB3 from Streptomyces platensis.